The chain runs to 235 residues: Aspartate/glutamate leucyltransferase (235 aa).

Belongs to the R-transferase family. Bpt subfamily.

It is found in the cytoplasm. It carries out the reaction N-terminal L-glutamyl-[protein] + L-leucyl-tRNA(Leu) = N-terminal L-leucyl-L-glutamyl-[protein] + tRNA(Leu) + H(+). The enzyme catalyses N-terminal L-aspartyl-[protein] + L-leucyl-tRNA(Leu) = N-terminal L-leucyl-L-aspartyl-[protein] + tRNA(Leu) + H(+). Functions in the N-end rule pathway of protein degradation where it conjugates Leu from its aminoacyl-tRNA to the N-termini of proteins containing an N-terminal aspartate or glutamate. In Pseudomonas savastanoi pv. phaseolicola (strain 1448A / Race 6) (Pseudomonas syringae pv. phaseolicola (strain 1448A / Race 6)), this protein is Aspartate/glutamate leucyltransferase.